The sequence spans 243 residues: Venom nerve growth factor 1 (243 aa).

The signal sequence occupies residues 1-18 (MSMLCYTLIIAFLIGIWA). A propeptide spanning residues 19–125 (APKSEDNVPL…TLNRNIRAKR (107 aa)) is cleaved from the precursor. Over residues 47 to 66 (GLKTSRNTDQRHPAPKKAED) the composition is skewed to basic and acidic residues. Residues 47–69 (GLKTSRNTDQRHPAPKKAEDQEL) form a disordered region. Cystine bridges form between C139–C204, C182–C232, and C192–C234. An N-linked (GlcNAc...) asparagine glycan is attached at N148.

It belongs to the NGF-beta family. Homodimer; non-covalently linked. Expressed by the venom gland.

The protein localises to the secreted. In terms of biological role, nerve growth factor is important for the development and maintenance of the sympathetic and sensory nervous systems. It stimulates division and differentiation of sympathetic and embryonic sensory neurons as well as basal forebrain cholinergic neurons in the brain. Its relevance in the snake venom is not clear. However, it has been shown to inhibit metalloproteinase-dependent proteolysis of platelet glycoprotein Ib alpha, suggesting a metalloproteinase inhibition to prevent metalloprotease autodigestion and/or protection against prey proteases. Binds a lipid between the two protein chains in the homodimer. The lipid-bound form promotes histamine relase from mouse mast cells, contrary to the lipid-free form. In Oxyuranus microlepidotus (Inland taipan), this protein is Venom nerve growth factor 1.